The sequence spans 163 residues: ADP-ribosylation factor-like protein 2-binding protein (163 aa).

This sequence belongs to the ARL2BP family. As to quaternary structure, found in a complex with ARL2BP, ARL2 and SLC25A6. Found in a complex with ARL2, ARL2BP and SLC25A4. Interacts with STAT2, STAT3 and STAT4. Interacts with GTP-bound ARL2 and ARL3; the complex ARL2-ARL2BP as well as ARL2BP alone, binds to SLC25A4. Interaction with ARL2 may be required for targeting to cilia basal body. Interacts with STAT3; interaction is enhanced with ARL2. Expressed in retina pigment epithelial cells (at protein level). Widely expressed.

Its subcellular location is the cytoplasm. It is found in the mitochondrion intermembrane space. The protein localises to the cytoskeleton. The protein resides in the microtubule organizing center. It localises to the centrosome. Its subcellular location is the nucleus. It is found in the spindle. The protein localises to the cilium basal body. In terms of biological role, together with ARL2, plays a role in the nuclear translocation, retention and transcriptional activity of STAT3. May play a role as an effector of ARL2. This is ADP-ribosylation factor-like protein 2-binding protein (ARL2BP) from Homo sapiens (Human).